Reading from the N-terminus, the 101-residue chain is Urease subunit beta (101 aa).

The protein belongs to the urease beta subunit family. As to quaternary structure, heterotrimer of UreA (gamma), UreB (beta) and UreC (alpha) subunits. Three heterotrimers associate to form the active enzyme.

It is found in the cytoplasm. The catalysed reaction is urea + 2 H2O + H(+) = hydrogencarbonate + 2 NH4(+). It functions in the pathway nitrogen metabolism; urea degradation; CO(2) and NH(3) from urea (urease route): step 1/1. The chain is Urease subunit beta from Dinoroseobacter shibae (strain DSM 16493 / NCIMB 14021 / DFL 12).